Consider the following 255-residue polypeptide: tRNA (guanine-N(1)-)-methyltransferase (255 aa).

S-adenosyl-L-methionine contacts are provided by residues Gly117 and 137–142; that span reads LGDFVL.

It belongs to the RNA methyltransferase TrmD family. Homodimer.

Its subcellular location is the cytoplasm. It catalyses the reaction guanosine(37) in tRNA + S-adenosyl-L-methionine = N(1)-methylguanosine(37) in tRNA + S-adenosyl-L-homocysteine + H(+). Functionally, specifically methylates guanosine-37 in various tRNAs. The chain is tRNA (guanine-N(1)-)-methyltransferase from Paraburkholderia phytofirmans (strain DSM 17436 / LMG 22146 / PsJN) (Burkholderia phytofirmans).